An 833-amino-acid polypeptide reads, in one-letter code: Glycerol-3-phosphate acyltransferase (833 aa).

The short motif at 309-314 is the HXXXXD motif element; sequence CHRSHI.

Belongs to the GPAT/DAPAT family.

The protein localises to the cell inner membrane. The enzyme catalyses sn-glycerol 3-phosphate + an acyl-CoA = a 1-acyl-sn-glycero-3-phosphate + CoA. The protein operates within phospholipid metabolism; CDP-diacylglycerol biosynthesis; CDP-diacylglycerol from sn-glycerol 3-phosphate: step 1/3. In Pseudomonas syringae pv. syringae (strain B728a), this protein is Glycerol-3-phosphate acyltransferase.